A 298-amino-acid chain; its full sequence is MELLDLKKQGINIKEQIPLSRYTFTKTGGEAEYLAFPKSTDEVEKLVKVTRENKIPLTIIGNASNLIIRDGGIDGLVIILTDLKEIKVKDNKVTADAGAKIVDTAFTAAHHGLSGMEFAAGIPGSIGGGVFMNAGAYGGEMQEVVESVKVLTRAGEFKTYSNKEMEFSYRHSLVQDNGDIVLSATFSLTPGNKLEILDHMHYLNALRRYKQPVEYPSCGSVFKRPTGHFVGPMIIKAGLQGKQVGGAQDSTKHAGFIVNKGGATATDYLNLIHLIQKVIKEKYDIDLHTEVRIIGKEK.

One can recognise an FAD-binding PCMH-type domain in the interval 26-191 (KTGGEAEYLA…LSATFSLTPG (166 aa)). Arg-170 is a catalytic residue. Ser-220 acts as the Proton donor in catalysis. The active site involves Glu-290.

It belongs to the MurB family. The cofactor is FAD.

It localises to the cytoplasm. The enzyme catalyses UDP-N-acetyl-alpha-D-muramate + NADP(+) = UDP-N-acetyl-3-O-(1-carboxyvinyl)-alpha-D-glucosamine + NADPH + H(+). Its pathway is cell wall biogenesis; peptidoglycan biosynthesis. Functionally, cell wall formation. The chain is UDP-N-acetylenolpyruvoylglucosamine reductase from Lactobacillus helveticus (strain DPC 4571).